A 224-amino-acid chain; its full sequence is Serum amyloid P-component (224 aa).

The signal sequence occupies residues 1 to 19 (MNKLMSWVSVLIILPEAFA). The Pentraxin (PTX) domain maps to 24–224 (RGKVFVFPRE…YVIVKPMVWG (201 aa)). The N-linked (GlcNAc...) asparagine glycan is linked to asparagine 51. A disulfide bridge links cysteine 55 with cysteine 114. Positions 77, 78, 155, 156, and 157 each coordinate Ca(2+). N-linked (GlcNAc...) asparagine glycosylation is present at asparagine 166. A Ca(2+)-binding site is contributed by glutamine 167.

It belongs to the pentraxin family. As to quaternary structure, homopentamer. Pentraxin (or pentaxin) have a discoid arrangement of 5 non-covalently bound subunits. The cofactor is Ca(2+).

It is found in the secreted. The chain is Serum amyloid P-component (APCS) from Bos taurus (Bovine).